A 500-amino-acid chain; its full sequence is Sulfate adenylyltransferase (500 aa).

Positions 1–165 (MLSPHGGILQ…LEAIQLPAHY (165 aa)) are N-terminal. Residues 166–390 (DYLNLRKSPA…LRQYNPPRYR (225 aa)) form a catalytic region. Position 193 (Q193) interacts with sulfate. Residues 193–196 (QTRN) and 287–290 (GRDH) contribute to the ATP site. Catalysis depends on residues T194, R195, and N196. R195 is a binding site for sulfate. A291 lines the sulfate pocket. I329 contributes to the ATP binding site. The interval 391 to 500 (QGFVIVVNHE…FLEDNKFFQF (110 aa)) is required for oligomerization; adenylyl-sulfate kinase-like.

This sequence belongs to the sulfate adenylyltransferase family. As to quaternary structure, homohexamer. Dimer of trimers.

It is found in the cytoplasm. It carries out the reaction sulfate + ATP + H(+) = adenosine 5'-phosphosulfate + diphosphate. The protein operates within sulfur metabolism; hydrogen sulfide biosynthesis; sulfite from sulfate: step 1/3. Catalyzes the first intracellular reaction of sulfate assimilation, forming adenosine-5'-phosphosulfate (APS) from inorganic sulfate and ATP. Plays an important role in sulfate activation as a component of the biosynthesis pathway of sulfur-containing amino acids. The sequence is that of Sulfate adenylyltransferase from Eremothecium gossypii (strain ATCC 10895 / CBS 109.51 / FGSC 9923 / NRRL Y-1056) (Yeast).